The chain runs to 640 residues: 1,4-alpha-glucan branching enzyme GlgB (640 aa).

The active-site Nucleophile is Asp-318. Catalysis depends on Glu-371, which acts as the Proton donor.

Belongs to the glycosyl hydrolase 13 family. GlgB subfamily. As to quaternary structure, monomer.

The enzyme catalyses Transfers a segment of a (1-&gt;4)-alpha-D-glucan chain to a primary hydroxy group in a similar glucan chain.. It participates in glycan biosynthesis; glycogen biosynthesis. In terms of biological role, catalyzes the formation of the alpha-1,6-glucosidic linkages in glycogen by scission of a 1,4-alpha-linked oligosaccharide from growing alpha-1,4-glucan chains and the subsequent attachment of the oligosaccharide to the alpha-1,6 position. The sequence is that of 1,4-alpha-glucan branching enzyme GlgB from Francisella tularensis subsp. holarctica (strain FTNF002-00 / FTA).